The chain runs to 474 residues: Selection and upkeep of intraepithelial T-cells protein 4 (474 aa).

An N-terminal signal peptide occupies residues 1-25 (MGATEVLTSYCVVLCLLQMVALSSG). Topologically, residues 26–241 (HFTVIGSQRP…VLSGELFSWK (216 aa)) are extracellular. The region spanning 27–140 (FTVIGSQRPI…EEHITEVKVT (114 aa)) is the Ig-like V-type domain. 2 disulfides stabilise this stretch: C48–C122 and C162–C216. N111 and N199 each carry an N-linked (GlcNAc...) asparagine glycan. An Ig-like C1-type domain is found at 141–234 (ATSSDIQILM…QEQSINIVLS (94 aa)). The helical transmembrane segment at 242-262 (IVWIMILSTISFVMIDFCMTY) threads the bilayer. Topologically, residues 263 to 298 (CVQQQLIHEESLSTVDNDQCESDQSEGTCYKRNYPW) are cytoplasmic. The helical transmembrane segment at 299-319 (IIIAVVPIISVFAIIGVMLFL) threads the bilayer. Residues 320–341 (HLEQRVTILEQHFELDTLWLED) lie on the Extracellular side of the membrane. A helical transmembrane segment spans residues 342–362 (ISVILCVVIVSNINLIPLIYF). At 363-381 (RLHEHVPRFKDRSPILNKA) the chain is on the cytoplasmic side. A helical membrane pass occupies residues 382-402 (VVFLHFIYFSIVCGTILLVHL). The Extracellular segment spans residues 403-420 (QLRNKVSISDSLFSLYNS). The chain crosses the membrane as a helical span at residues 421-441 (WLTDISMILGFLLSIFIVTTI). The Cytoplasmic portion of the chain corresponds to 442–474 (AKSSLFNKKWCIGLCIHMKEAEATGGPCEGEEL).

It belongs to the SKINT family. Expressed in skin, thymus and, to a lower extent, bladder and testis.

It localises to the membrane. Its function is as follows. May act by engaging a cell surface molecule on immature T-cells in the embryonic thymus. This chain is Selection and upkeep of intraepithelial T-cells protein 4 (Skint4), found in Mus musculus (Mouse).